The following is a 167-amino-acid chain: Large ribosomal subunit protein uL5 (167 aa).

The protein belongs to the universal ribosomal protein uL5 family. Part of the 50S ribosomal subunit; contacts the 5S rRNA and probably tRNA. Forms a bridge to the 30S subunit in the 70S ribosome.

Functionally, this is one of the proteins that bind and probably mediate the attachment of the 5S RNA into the large ribosomal subunit, where it forms part of the central protuberance. In the 70S ribosome it contacts protein S13 of the 30S subunit (bridge B1b), connecting the 2 subunits; this bridge is implicated in subunit movement. May contact the P site tRNA; the 5S rRNA and some of its associated proteins might help stabilize positioning of ribosome-bound tRNAs. In Methanoculleus marisnigri (strain ATCC 35101 / DSM 1498 / JR1), this protein is Large ribosomal subunit protein uL5.